Here is a 256-residue protein sequence, read N- to C-terminus: DNA repair protein RecO (256 aa).

It belongs to the RecO family.

In terms of biological role, involved in DNA repair and RecF pathway recombination. The polypeptide is DNA repair protein RecO (Streptococcus equi subsp. zooepidemicus (strain MGCS10565)).